Consider the following 354-residue polypeptide: Allantoicase (354 aa).

Belongs to the allantoicase family.

It catalyses the reaction allantoate + H2O = (S)-ureidoglycolate + urea. The protein operates within nitrogen metabolism; (S)-allantoin degradation; (S)-ureidoglycolate from allantoate (aminidohydrolase route): step 1/1. Utilization of purines as secondary nitrogen sources, when primary sources are limiting. This chain is Allantoicase (alc-1), found in Neurospora crassa (strain ATCC 24698 / 74-OR23-1A / CBS 708.71 / DSM 1257 / FGSC 987).